A 354-amino-acid chain; its full sequence is Probable alcohol acetyltransferase (354 aa).

Catalysis depends on charge relay system residues serine 124 and histidine 293.

It belongs to the AB hydrolase superfamily.

Probable alcohol acetyltransferase that uses acetyl-CoA to synthesize acetate esters from various alcohols. Not involved in the synthesis of ethyl acetate. The protein is Probable alcohol acetyltransferase (EAT2) of Cyberlindnera jadinii (strain ATCC 18201 / CBS 1600 / BCRC 20928 / JCM 3617 / NBRC 0987 / NRRL Y-1542) (Torula yeast).